We begin with the raw amino-acid sequence, 70 residues long: Small ribosomal subunit protein bS21 (70 aa).

The protein belongs to the bacterial ribosomal protein bS21 family.

This is Small ribosomal subunit protein bS21 from Bordetella avium (strain 197N).